A 59-amino-acid chain; its full sequence is Large ribosomal subunit protein bL32 (59 aa).

Over residues 1–15 (MAVPKRKTSKSKRDM) the composition is skewed to basic residues. The interval 1 to 21 (MAVPKRKTSKSKRDMRRASNS) is disordered.

Belongs to the bacterial ribosomal protein bL32 family.

The polypeptide is Large ribosomal subunit protein bL32 (Alkaliphilus metalliredigens (strain QYMF)).